We begin with the raw amino-acid sequence, 162 residues long: Probable ergosterol biosynthetic protein 28 homolog (162 aa).

4 helical membrane passes run 7–25 (AWMS…MCYA), 40–60 (LSRA…VLIF), 69–89 (IAHI…VFFY), and 96–116 (IVTV…LTFL).

It belongs to the ERG28 family. As to expression, expressed in tissues including muscles, intestine and neurons.

Its subcellular location is the endoplasmic reticulum membrane. It localises to the cell projection. It is found in the dendrite. Its function is as follows. Promotes the translocation of slo-1 potassium ion channels from the endoplasmic reticulum to its final destination at the plasma membrane, probably by shielding from premature proteasomal degradation in the endoplasmic reticulum. Maintains the levels of slo-1 potassium ion channel at the presynaptic neurons. The chain is Probable ergosterol biosynthetic protein 28 homolog from Caenorhabditis elegans.